A 282-amino-acid chain; its full sequence is Shikimate dehydrogenase (NADP(+)) (282 aa).

Residues 18–20 (SRS) and Thr65 contribute to the shikimate site. The active-site Proton acceptor is the Lys69. Positions 90 and 106 each coordinate shikimate. NADP(+) is bound by residues 134 to 138 (GAGGA), 158 to 163 (NRTAAR), and Ile223. Tyr225 provides a ligand contact to shikimate. Residue Gly246 participates in NADP(+) binding.

Belongs to the shikimate dehydrogenase family. In terms of assembly, homodimer.

The catalysed reaction is shikimate + NADP(+) = 3-dehydroshikimate + NADPH + H(+). Its pathway is metabolic intermediate biosynthesis; chorismate biosynthesis; chorismate from D-erythrose 4-phosphate and phosphoenolpyruvate: step 4/7. Involved in the biosynthesis of the chorismate, which leads to the biosynthesis of aromatic amino acids. Catalyzes the reversible NADPH linked reduction of 3-dehydroshikimate (DHSA) to yield shikimate (SA). The polypeptide is Shikimate dehydrogenase (NADP(+)) (Methylobacterium radiotolerans (strain ATCC 27329 / DSM 1819 / JCM 2831 / NBRC 15690 / NCIMB 10815 / 0-1)).